Reading from the N-terminus, the 78-residue chain is Myrmicitoxin-Ta2a (78 aa).

An N-terminal signal peptide occupies residues 1 to 26 (MKLSFLSLALAIIFVTVLIYAPQAEA). The propeptide occupies 27 to 56 (KALADAVADADADADAAADAVADALADADA). Position 77 is a lysine amide (lysine 77).

This sequence belongs to the formicidae venom precursor-01 superfamily. Expressed by the venom gland.

The protein resides in the secreted. In terms of biological role, peptide with toxicity towards insects that may also act as antimicrobial peptide. Causes calcium influx in F11 cells (EC(50)=5.8 nM), possibly by modulating sodium channels (Nav). In vivo, is lethal to insects, but does not show toxicity to vertebrates. Intraplantar injection into mice does not induce spontaneous nocifensive behaviors up to a dose of 200 pmol. The polypeptide is Myrmicitoxin-Ta2a (Tetramorium africanum (Fierce ant)).